The sequence spans 585 residues: Zinc finger protein 614 (585 aa).

The 72-residue stretch at 8–79 folds into the KRAB domain; sequence LTLEDVAVEF…DAKIQNKNCP (72 aa). The C2H2-type 1; atypical zinc-finger motif lies at 205-227; it reads HACIECEQTFLRKSQLIYHENIC. A C2H2-type 2; degenerate zinc finger spans residues 257–281; that stretch reads KICIPNEYRKGSTVKSSLITHQQTH. 10 consecutive C2H2-type zinc fingers follow at residues 287–309, 315–337, 343–365, 371–393, 399–421, 427–449, 455–477, 483–505, 511–533, and 539–561; these read YMCS…QRTH, YVCK…QRTH, YICS…QRTH, YMCS…QRSH, YICN…QRTH, YECN…ERCH, FVCT…QRIH, YECN…QRTH, and YGCS…KKMH.

It belongs to the krueppel C2H2-type zinc-finger protein family.

It localises to the nucleus. In terms of biological role, may be involved in transcriptional regulation. The sequence is that of Zinc finger protein 614 (ZNF614) from Homo sapiens (Human).